A 190-amino-acid polypeptide reads, in one-letter code: A-type ATP synthase subunit E (190 aa).

The protein belongs to the V-ATPase E subunit family. In terms of assembly, has multiple subunits with at least A(3), B(3), C, D, E, F, H, I and proteolipid K(x).

The protein localises to the cell membrane. In terms of biological role, component of the A-type ATP synthase that produces ATP from ADP in the presence of a proton gradient across the membrane. The chain is A-type ATP synthase subunit E from Pyrobaculum islandicum (strain DSM 4184 / JCM 9189 / GEO3).